The primary structure comprises 646 residues: Long-chain fatty acid transport protein 1 (646 aa).

The Extracellular segment spans residues 1–13; the sequence is MRAPGAGAASVVS. A helical transmembrane segment spans residues 14 to 34; the sequence is LALLWLLGLPWTWSAAAALGV. Over 35–646 the chain is Cytoplasmic; that stretch reads YVGSGGWRFL…TRICSGAFAL (612 aa). The segment at 191–475 is sufficient for oligomerization; that stretch reads EVSGHLGKSL…YVSESATSKK (285 aa). An AMP-binding site is contributed by 246-257; it reads YIYTSGTTGLPK.

It belongs to the ATP-dependent AMP-binding enzyme family. As to quaternary structure, self-associates. May function as a homodimer. Interacts with EPRS1; mediates the translocation of SLC27A1 from the cytoplasm to the plasma membrane thereby increasing the uptake of long-chain fatty acids. Interacts with DGAT2 and this interaction is enhanced in the presence of ZFYVE1. As to expression, highest levels of expression are detected in muscle and adipose tissue small, intermediate levels in small intestine, and barely detectable in liver. Expressed in brain gray matter.

It localises to the cell membrane. Its subcellular location is the endomembrane system. The protein localises to the cytoplasm. It carries out the reaction a fatty acid(in) = a fatty acid(out). The enzyme catalyses (9Z)-octadecenoate(out) = (9Z)-octadecenoate(in). The catalysed reaction is hexadecanoate(out) = hexadecanoate(in). It catalyses the reaction (9Z,12Z)-octadecadienoate(out) = (9Z,12Z)-octadecadienoate(in). It carries out the reaction (5Z,8Z,11Z,14Z)-eicosatetraenoate(out) = (5Z,8Z,11Z,14Z)-eicosatetraenoate(in). The enzyme catalyses a long-chain fatty acid + ATP + CoA = a long-chain fatty acyl-CoA + AMP + diphosphate. The catalysed reaction is (5Z,8Z,11Z,14Z)-eicosatetraenoate + ATP + CoA = (5Z,8Z,11Z,14Z)-eicosatetraenoyl-CoA + AMP + diphosphate. It catalyses the reaction a very long-chain fatty acid + ATP + CoA = a very long-chain fatty acyl-CoA + AMP + diphosphate. It carries out the reaction tetracosanoate + ATP + CoA = tetracosanoyl-CoA + AMP + diphosphate. Inhibited by Triacsin C. In terms of biological role, mediates the import of long-chain fatty acids (LCFA) into the cell by facilitating their transport at the plasma membrane. Also functions as an acyl-CoA ligase catalyzing the ATP-dependent formation of fatty acyl-CoA using LCFA and very-long-chain fatty acids (VLCFA) as substrates, which prevents fatty acid efflux from cells and might drive more fatty acid uptake. May act directly as a bona fide transporter, or alternatively, in a cytoplasmic or membrane-associated multimeric protein complex to trap and draw fatty acids towards accumulation. Plays a pivotal role in regulating available LCFA substrates from exogenous sources in tissues undergoing high levels of beta-oxidation or triglyceride synthesis. May be involved in regulation of cholesterol metabolism. Probably involved in fatty acid transport across the blood barrier. The protein is Long-chain fatty acid transport protein 1 of Homo sapiens (Human).